A 394-amino-acid chain; its full sequence is Elongation factor Tu (394 aa).

Positions 10-204 (KPHVNIGTIG…AVDSYIPQPV (195 aa)) constitute a tr-type G domain. The segment at 19 to 26 (GHVDHGKT) is G1. Residue 19–26 (GHVDHGKT) coordinates GTP. Position 26 (Thr-26) interacts with Mg(2+). The G2 stretch occupies residues 60–64 (GITIS). A G3 region spans residues 81–84 (DCPG). Residues 81 to 85 (DCPGH) and 136 to 139 (NKVD) contribute to the GTP site. Residues 136 to 139 (NKVD) form a G4 region. The tract at residues 174–176 (SAL) is G5.

It belongs to the TRAFAC class translation factor GTPase superfamily. Classic translation factor GTPase family. EF-Tu/EF-1A subfamily. Monomer.

The protein resides in the cytoplasm. It catalyses the reaction GTP + H2O = GDP + phosphate + H(+). In terms of biological role, GTP hydrolase that promotes the GTP-dependent binding of aminoacyl-tRNA to the A-site of ribosomes during protein biosynthesis. This is Elongation factor Tu from Rickettsia rhipicephali.